The chain runs to 370 residues: Probable aspartic-type endopeptidase ARB_04018 (370 aa).

Positions 1 to 21 (MWHSPFSTAFTLFLGFFTLTL) are cleaved as a signal peptide. N-linked (GlcNAc...) asparagine glycans are attached at residues asparagine 80 and asparagine 102. The region spanning 94–367 (FVNEITIGND…DHDGPKMGFA (274 aa)) is the Peptidase A1 domain. Aspartate 110 is a catalytic residue. N-linked (GlcNAc...) asparagine glycosylation is present at asparagine 251. The active site involves aspartate 261. Asparagine 298 carries an N-linked (GlcNAc...) asparagine glycan.

It belongs to the peptidase A1 family.

It localises to the secreted. In terms of biological role, probable aspartic-type endopeptidase which contributes to virulence. In Arthroderma benhamiae (strain ATCC MYA-4681 / CBS 112371) (Trichophyton mentagrophytes), this protein is Probable aspartic-type endopeptidase ARB_04018.